The primary structure comprises 198 residues: Small ribosomal subunit protein uS2 (198 aa).

This sequence belongs to the universal ribosomal protein uS2 family.

The sequence is that of Small ribosomal subunit protein uS2 from Methanobrevibacter smithii (strain ATCC 35061 / DSM 861 / OCM 144 / PS).